The following is a 530-amino-acid chain: Autoinducer-2 kinase (530 aa).

The protein belongs to the FGGY kinase family.

The protein localises to the cytoplasm. It catalyses the reaction (S)-4,5-dihydroxypentane-2,3-dione + ATP = (2S)-2-hydroxy-3,4-dioxopentyl phosphate + ADP + H(+). Its function is as follows. Catalyzes the phosphorylation of autoinducer-2 (AI-2) to phospho-AI-2, which subsequently inactivates the transcriptional regulator LsrR and leads to the transcription of the lsr operon. Phosphorylates the ring-open form of (S)-4,5-dihydroxypentane-2,3-dione (DPD), which is the precursor to all AI-2 signaling molecules, at the C5 position. The polypeptide is Autoinducer-2 kinase (Escherichia coli O9:H4 (strain HS)).